A 307-amino-acid chain; its full sequence is N-acetylmuramic acid 6-phosphate etherase (307 aa).

One can recognise an SIS domain in the interval 62–225; sequence IVSSFNRGGR…STASMIRIGK (164 aa). Glu-90 acts as the Proton donor in catalysis. Residue Glu-121 is part of the active site.

Belongs to the GCKR-like family. MurNAc-6-P etherase subfamily. As to quaternary structure, homodimer.

It catalyses the reaction N-acetyl-D-muramate 6-phosphate + H2O = N-acetyl-D-glucosamine 6-phosphate + (R)-lactate. The protein operates within amino-sugar metabolism; 1,6-anhydro-N-acetylmuramate degradation. It participates in amino-sugar metabolism; N-acetylmuramate degradation. It functions in the pathway cell wall biogenesis; peptidoglycan recycling. Specifically catalyzes the cleavage of the D-lactyl ether substituent of MurNAc 6-phosphate, producing GlcNAc 6-phosphate and D-lactate. Together with AnmK, is also required for the utilization of anhydro-N-acetylmuramic acid (anhMurNAc) either imported from the medium or derived from its own cell wall murein, and thus plays a role in cell wall recycling. In Pseudoalteromonas atlantica (strain T6c / ATCC BAA-1087), this protein is N-acetylmuramic acid 6-phosphate etherase.